The chain runs to 229 residues: Large ribosomal subunit protein uL1 (229 aa).

It belongs to the universal ribosomal protein uL1 family. As to quaternary structure, part of the 50S ribosomal subunit.

Its function is as follows. Binds directly to 23S rRNA. The L1 stalk is quite mobile in the ribosome, and is involved in E site tRNA release. Functionally, protein L1 is also a translational repressor protein, it controls the translation of the L11 operon by binding to its mRNA. This is Large ribosomal subunit protein uL1 from Streptococcus sanguinis (strain SK36).